The chain runs to 245 residues: 1-(5-phosphoribosyl)-5-[(5-phosphoribosylamino)methylideneamino] imidazole-4-carboxamide isomerase (245 aa).

Asp8 serves as the catalytic Proton acceptor. Asp129 (proton donor) is an active-site residue.

Belongs to the HisA/HisF family.

Its subcellular location is the cytoplasm. It carries out the reaction 1-(5-phospho-beta-D-ribosyl)-5-[(5-phospho-beta-D-ribosylamino)methylideneamino]imidazole-4-carboxamide = 5-[(5-phospho-1-deoxy-D-ribulos-1-ylimino)methylamino]-1-(5-phospho-beta-D-ribosyl)imidazole-4-carboxamide. It functions in the pathway amino-acid biosynthesis; L-histidine biosynthesis; L-histidine from 5-phospho-alpha-D-ribose 1-diphosphate: step 4/9. This Trichlorobacter lovleyi (strain ATCC BAA-1151 / DSM 17278 / SZ) (Geobacter lovleyi) protein is 1-(5-phosphoribosyl)-5-[(5-phosphoribosylamino)methylideneamino] imidazole-4-carboxamide isomerase.